Here is a 171-residue protein sequence, read N- to C-terminus: uncharacterized protein (171 aa).

Belongs to the transferase hexapeptide repeat family.

This is an uncharacterized protein from Bacillus subtilis (strain 168).